We begin with the raw amino-acid sequence, 323 residues long: NADH-cytochrome b5 reductase 2 (323 aa).

Residues 32–48 form a helical membrane-spanning segment; sequence LAPIYLGVGLIGLGVGL. In terms of domain architecture, FAD-binding FR-type spans 72-177; it reads QGWVDLKLAQ…KGPIPKYPWE (106 aa). 180-215 contacts FAD; that stretch reads KHKHICLIAGGTGITPMYQLARKIFKDPEDQTKVTL.

This sequence belongs to the flavoprotein pyridine nucleotide cytochrome reductase family. FAD serves as cofactor.

The protein resides in the mitochondrion outer membrane. It catalyses the reaction 2 Fe(III)-[cytochrome b5] + NADH = 2 Fe(II)-[cytochrome b5] + NAD(+) + H(+). Its function is as follows. May mediate the reduction of outer membrane cytochrome b5. The protein is NADH-cytochrome b5 reductase 2 (mcr1) of Aspergillus fumigatus (strain ATCC MYA-4609 / CBS 101355 / FGSC A1100 / Af293) (Neosartorya fumigata).